A 669-amino-acid polypeptide reads, in one-letter code: NAD-dependent malic enzyme, mitochondrial (669 aa).

Over residues 33–43 the composition is skewed to polar residues; sequence IQQSRLYSSNT. The tract at residues 33–68 is disordered; it reads IQQSRLYSSNTRSHKATTTRENTFQKPYSDEEVTKT. Arg142 lines the fumarate pocket. The Proton donor role is filled by Tyr187. The active-site Proton acceptor is Lys259. A divalent metal cation contacts are provided by Glu330, Asp331, and Asp354. Ala387 and Ala390 together coordinate NAD(+). Positions 499 and 539 each coordinate (S)-malate.

Belongs to the malic enzymes family. Requires Mg(2+) as cofactor. Mn(2+) serves as cofactor.

Its subcellular location is the mitochondrion matrix. It catalyses the reaction (S)-malate + NAD(+) = pyruvate + CO2 + NADH. The enzyme catalyses oxaloacetate + H(+) = pyruvate + CO2. NAD-dependent mitochondrial malic enzyme that catalyzes the oxidative decarboxylation of malate to pyruvate. This is NAD-dependent malic enzyme, mitochondrial (MAE1) from Saccharomyces cerevisiae (strain ATCC 204508 / S288c) (Baker's yeast).